The chain runs to 1299 residues: DNA-directed RNA polymerase subunit beta' (1299 aa).

Residues cysteine 60, cysteine 62, cysteine 75, and cysteine 78 each contribute to the Zn(2+) site. Residues aspartate 535, aspartate 537, and aspartate 539 each coordinate Mg(2+). Positions 877, 954, 961, and 964 each coordinate Zn(2+).

The protein belongs to the RNA polymerase beta' chain family. In terms of assembly, the RNAP catalytic core consists of 2 alpha, 1 beta, 1 beta' and 1 omega subunit. When a sigma factor is associated with the core the holoenzyme is formed, which can initiate transcription. Requires Mg(2+) as cofactor. It depends on Zn(2+) as a cofactor.

The catalysed reaction is RNA(n) + a ribonucleoside 5'-triphosphate = RNA(n+1) + diphosphate. In terms of biological role, DNA-dependent RNA polymerase catalyzes the transcription of DNA into RNA using the four ribonucleoside triphosphates as substrates. This is DNA-directed RNA polymerase subunit beta' from Pseudarthrobacter chlorophenolicus (strain ATCC 700700 / DSM 12829 / CIP 107037 / JCM 12360 / KCTC 9906 / NCIMB 13794 / A6) (Arthrobacter chlorophenolicus).